Reading from the N-terminus, the 748-residue chain is Pleckstrin homology domain-containing family M member 3 (748 aa).

Disordered regions lie at residues 88–107 (HAKE…PLLS) and 129–187 (NDSL…RNKN). 2 stretches are compositionally biased toward basic and acidic residues: residues 129–140 (NDSLDHLEDAPK) and 148–159 (SRSDVSHIDWKN). Over residues 167–180 (QRSSSQGMHCTSPF) the composition is skewed to polar residues. PH domains are found at residues 200–297 (NILK…EAIC) and 348–443 (NIIK…SAAN). The Phorbol-ester/DAG-type zinc finger occupies 656-709 (SHVYSCSLCSQKGFICEICNNGEILYPFEENSTSRCENCGAVFHSDCKVRTVPC).

The protein localises to the cytoplasm. It is found in the golgi apparatus. It localises to the cell membrane. Functionally, may play a role during muscle differentiation. The sequence is that of Pleckstrin homology domain-containing family M member 3 (plekhm3) from Xenopus laevis (African clawed frog).